We begin with the raw amino-acid sequence, 388 residues long: MAVSVTPIRDTKWLTLEVCREFQRGTCSRPDTECKFAHPSKSCQVENGRVIACFDSLKGRCSRENCKYLHPPPHLKTQLEINGRNNLIQQKNMAMLAQQMQLANAMMPGAPLQPVPMFSVAPSLATNASAAAFNPYLGPVSPSLVPAEILPTAPMLVTGNPGVPVPAAAAAAAQKLMRTDRLEVCREYQRGNCNRGENDCRFAHPADSTMIDTNDNTVTVCMDYIKGRCSREKCKYFHPPAHLQAKIKAAQYQVNQAAAAQAAATAAAMTQSAVKSLKRPLEATFDLGIPQAVLPPLPKRPALEKTNGATAVFNTGIFQYQQALANMQLQQHTAFLPPVPMVHGATPATVSAATTSATSVPFAATATANQIPIISAEHLTSHKYVTQM.

Thr-6 is subject to Phosphothreonine. 4 consecutive C3H1-type zinc fingers follow at residues 13-41, 47-73, 179-207, and 215-241; these read WLTLEVCREFQRGTCSRPDTECKFAHPSK, NGRVIACFDSLKGRCSRENCKYLHPPP, TDRLEVCREYQRGNCNRGENDCRFAHPAD, and DNTVTVCMDYIKGRCSREKCKYFHPPA.

Belongs to the muscleblind family. Interacts with DDX1 and YBX1. Interacts with HNRNPH1; the interaction in RNA-independent. Interacts with RBPMS; the interaction allows cooperative assembly of RNA-bound stable cell-specific alternative splicing regulatory complexes. Highly expressed in cardiac, skeletal muscle and during myoblast differentiation. Weakly expressed in other tissues (at protein level). Expressed in heart, brain, placenta, lung, liver, skeletal muscle, kidney and pancreas.

The protein resides in the nucleus. Its subcellular location is the cytoplasm. The protein localises to the cytoplasmic granule. In terms of biological role, mediates pre-mRNA alternative splicing regulation. Acts either as activator or repressor of splicing on specific pre-mRNA targets. Inhibits cardiac troponin-T (TNNT2) pre-mRNA exon inclusion but induces insulin receptor (IR) pre-mRNA exon inclusion in muscle. Antagonizes the alternative splicing activity pattern of CELF proteins. Regulates the TNNT2 exon 5 skipping through competition with U2AF2. Inhibits the formation of the spliceosome A complex on intron 4 of TNNT2 pre-mRNA. Binds to the stem-loop structure within the polypyrimidine tract of TNNT2 intron 4 during spliceosome assembly. Binds to the 5'-YGCU(U/G)Y-3'consensus sequence. Binds to the IR RNA. Binds to expanded CUG repeat RNA, which folds into a hairpin structure containing GC base pairs and bulged, unpaired U residues. Together with RNA binding proteins RBPMS and RBFOX2, activates vascular smooth muscle cells alternative splicing events. Regulates NCOR2 alternative splicing. The protein is Muscleblind-like protein 1 (MBNL1) of Homo sapiens (Human).